A 186-amino-acid chain; its full sequence is MITMDNIIRDGNPTLRARAKAIEFPLSEEDKKLAHDMMEFLENSQNPEIAKKYHLRAGVGLAAPQVDVSKRMTAVLVPGIEDDDEPIFKHVLINPTILSESVQLAALGEGEGCLSVDRDIPGYVPRHDRIKLRWYDLDGNKHVERLRDYPAIVVQHEIDHLNGILFYDHINKEQPLTVPEGTIILE.

Residues C113 and H156 each coordinate Fe cation. E157 is an active-site residue. H160 provides a ligand contact to Fe cation.

The protein belongs to the polypeptide deformylase family. Requires Fe(2+) as cofactor.

The catalysed reaction is N-terminal N-formyl-L-methionyl-[peptide] + H2O = N-terminal L-methionyl-[peptide] + formate. Removes the formyl group from the N-terminal Met of newly synthesized proteins. Requires at least a dipeptide for an efficient rate of reaction. N-terminal L-methionine is a prerequisite for activity but the enzyme has broad specificity at other positions. This chain is Peptide deformylase, found in Ligilactobacillus salivarius (strain UCC118) (Lactobacillus salivarius).